The primary structure comprises 538 residues: Syncytin-2 (538 aa).

A signal peptide spans 1–15 (MGLLLLVLILTPSLA). The Extracellular portion of the chain corresponds to 16-478 (AYRHPDFPLL…GWLNWEGTWK (463 aa)). Residues 43 to 46 (CWLC) carry the CXXC motif. Cystine bridges form between Cys43–Cys46, Cys43–Cys439, and Cys431–Cys438. Residues Asn133, Asn146, Asn177, Asn220, Asn241, Asn247, Asn312, and Asn332 are each glycosylated (N-linked (GlcNAc...) asparagine). The fusion peptide stretch occupies residues 354-374 (FIPLLAGLGILAGTGTGIAGI). The short motif at 414–430 (LQNRRGLDMLTAAQGGI) is the CKS-17 element. Positions 431–439 (CLALDEKCC) match the CX6CC motif. Residue Asn443 is glycosylated (N-linked (GlcNAc...) asparagine). Residues 479–499 (WFSWVLPLTGPLVSLLLLLLF) form a helical membrane-spanning segment. Residues 500 to 538 (GPCLLNLITQFVSSRLQAIKLQTNLSAGRHPRNIQESPF) are Cytoplasmic-facing.

Belongs to the gamma type-C retroviral envelope protein family. HERV class-I FRD env subfamily. The surface and transmembrane proteins form a heterodimer. They are attached by non-covalent interactions or by a labile interchain disulfide bond. Specific enzymatic cleavages in vivo yield the mature SU and TM proteins. In terms of processing, the CXXC motif is highly conserved across a broad range of retroviral envelope proteins. It is thought to participate in the formation of a labile disulfide bond possibly with the CX6CC motif present in the transmembrane protein.

Its subcellular location is the virion. The protein resides in the cell membrane. This endogenous retroviral envelope protein has retained its original fusogenic properties and participates in trophoblast fusion and the formation of a syncytium during placenta morphogenesis. The interaction with MFSD2A is apparently important for this process. Functionally, endogenous envelope proteins may have kept, lost or modified their original function during evolution but this one can still make pseudotypes with MLV, HIV-1 or SIV-1 virions and confer infectivity. Retroviral envelope proteins mediate receptor recognition and membrane fusion during early infection. The surface protein mediates receptor recognition, while the transmembrane protein anchors the envelope heterodimer to the viral membrane through one transmembrane domain. The other hydrophobic domain, called fusion peptide, mediates fusion of the viral membrane with the target cell membrane. The sequence is that of Syncytin-2 (ERVFRD-1) from Pan troglodytes (Chimpanzee).